A 300-amino-acid polypeptide reads, in one-letter code: Cation-efflux pump FieF (300 aa).

The helical transmembrane segment at 24–44 threads the bilayer; it reads LLIKIFAWWYTGSVSILAALV. Positions 45 and 49 each coordinate Zn(2+). A run of 2 helical transmembrane segments spans residues 82–102 and 114–134; these read AALA…LTSI and PGVG…LVTF. Residues His153 and Asp157 each coordinate Zn(2+). 2 helical membrane-spanning segments follow: residues 156–176 and 178–198; these read SDVM…YGWH and ADAL…LRMG.

The protein belongs to the cation diffusion facilitator (CDF) transporter (TC 2.A.4) family. FieF subfamily. Homodimer.

It localises to the cell inner membrane. The catalysed reaction is Zn(2+)(in) + H(+)(out) = Zn(2+)(out) + H(+)(in). The enzyme catalyses Cd(2+)(in) + H(+)(out) = Cd(2+)(out) + H(+)(in). It carries out the reaction Fe(2+)(in) + H(+)(out) = Fe(2+)(out) + H(+)(in). Divalent metal cation transporter which exports Zn(2+), Cd(2+) and possibly Fe(2+). May be involved in zinc and iron detoxification by efflux. In Salmonella choleraesuis (strain SC-B67), this protein is Cation-efflux pump FieF.